Consider the following 471-residue polypeptide: Arginine biosynthesis bifunctional protein ArgJ, mitochondrial (471 aa).

The N-terminal 33 residues, 1 to 33, are a transit peptide targeting the mitochondrion; that stretch reads MAMAGCNGFFLHQLRQPRLQLARQLGRTPSRAY. Residues T201, K230, T241, E327, N466, and T471 each contribute to the substrate site. The active-site Nucleophile is the T241.

The protein belongs to the ArgJ family. Heterodimer of an alpha and a beta chain. In terms of processing, the alpha and beta chains are autoproteolytically processed from a single precursor protein within the mitochondrion.

The protein localises to the mitochondrion matrix. The catalysed reaction is N(2)-acetyl-L-ornithine + L-glutamate = N-acetyl-L-glutamate + L-ornithine. The enzyme catalyses L-glutamate + acetyl-CoA = N-acetyl-L-glutamate + CoA + H(+). The protein operates within amino-acid biosynthesis; L-arginine biosynthesis; L-ornithine and N-acetyl-L-glutamate from L-glutamate and N(2)-acetyl-L-ornithine (cyclic): step 1/1. It participates in amino-acid biosynthesis; L-arginine biosynthesis; N(2)-acetyl-L-ornithine from L-glutamate: step 1/4. In terms of biological role, catalyzes two activities which are involved in the cyclic version of arginine biosynthesis: the synthesis of acetylglutamate from glutamate and acetyl-CoA, and of ornithine by transacetylation between acetylornithine and glutamate. In Chaetomium globosum (strain ATCC 6205 / CBS 148.51 / DSM 1962 / NBRC 6347 / NRRL 1970) (Soil fungus), this protein is Arginine biosynthesis bifunctional protein ArgJ, mitochondrial.